The chain runs to 215 residues: Orotate phosphoribosyltransferase (215 aa).

Lys-26 serves as a coordination point for 5-phospho-alpha-D-ribose 1-diphosphate. Orotate is bound at residue 34 to 35 (FF). 5-phospho-alpha-D-ribose 1-diphosphate is bound by residues 72–73 (YK), Arg-99, Lys-100, Lys-103, His-105, and 124–132 (DDVITAGTA). Orotate contacts are provided by Thr-128 and Arg-156.

The protein belongs to the purine/pyrimidine phosphoribosyltransferase family. PyrE subfamily. Homodimer. Mg(2+) serves as cofactor.

It catalyses the reaction orotidine 5'-phosphate + diphosphate = orotate + 5-phospho-alpha-D-ribose 1-diphosphate. The protein operates within pyrimidine metabolism; UMP biosynthesis via de novo pathway; UMP from orotate: step 1/2. Functionally, catalyzes the transfer of a ribosyl phosphate group from 5-phosphoribose 1-diphosphate to orotate, leading to the formation of orotidine monophosphate (OMP). The sequence is that of Orotate phosphoribosyltransferase from Yersinia pseudotuberculosis serotype O:1b (strain IP 31758).